Here is a 550-residue protein sequence, read N- to C-terminus: Hydroxylamine reductase (550 aa).

4 residues coordinate [2Fe-2S] cluster: Cys-3, Cys-6, Cys-18, and Cys-25. 8 residues coordinate hybrid [4Fe-2O-2S] cluster: His-249, Glu-273, Cys-317, Cys-405, Cys-433, Cys-458, Glu-492, and Lys-494. Cys-405 is modified (cysteine persulfide).

It belongs to the HCP family. It depends on [2Fe-2S] cluster as a cofactor. The cofactor is hybrid [4Fe-2O-2S] cluster.

It localises to the cytoplasm. It catalyses the reaction A + NH4(+) + H2O = hydroxylamine + AH2 + H(+). Its function is as follows. Catalyzes the reduction of hydroxylamine to form NH(3) and H(2)O. The chain is Hydroxylamine reductase from Escherichia fergusonii (strain ATCC 35469 / DSM 13698 / CCUG 18766 / IAM 14443 / JCM 21226 / LMG 7866 / NBRC 102419 / NCTC 12128 / CDC 0568-73).